The sequence spans 66 residues: MFTLKKSQLLLFFPGTINLSLCQDETNAEEERRDEEVAKMEEIKRGLLSGILGAGKHIVCGLSGLC.

The signal sequence occupies residues 1 to 22; the sequence is MFTLKKSQLLLFFPGTINLSLC. Positions 23–45 are excised as a propeptide; it reads QDETNAEEERRDEEVAKMEEIKR. The cysteines at positions 60 and 66 are disulfide-linked.

Expressed by the skin glands.

It localises to the secreted. Functionally, antimicrobial peptide active at least against the Gram-positive bacterium S.aureus but with otherwise unclear activity spectrum. Lacks hemolytic activity against rabbit or human erythrocytes. The protein is Nigrocin-2GRa of Odorrana grahami (Yunnanfu frog).